Reading from the N-terminus, the 315-residue chain is MSLLEAIAELHVIPYTDVLAWVVMAAFIAGVAADYRDNLLAARRLTAGAWWLFAVFWFVLIQHFAFVHRSVVQTVLILIAVPACLYVGWLVFAGRDSLLTLSRAVAFMTVIYLPFETSELARGLLIEAVAFQTATVIDALSLADGMEYMQDPDEGSTLMNTFWFPETGRASRVVFECTGIGAMSIFGGLIAAVNAPLRRKAVGIALSISIIWVLNIGRNVFIALANGYQWFAYSWLEGPIMALFGLTDPARVSFFVADRVLAQLLAVVALAGLAWFIARWVPELLDIAEELLSIVGIDVELHHPSVDRTDTDPAD.

The next 7 helical transmembrane spans lie at 12-32 (VIPY…AGVA), 47-67 (AGAW…FAFV), 74-94 (TVLI…VFAG), 173-193 (VVFE…IAAV), 204-224 (IALS…FIAL), 227-247 (GYQW…FGLT), and 260-280 (VLAQ…IARW). Cysteine 177 functions as the Acyl-thioester intermediate in the catalytic mechanism. Residue arginine 218 is the Proton donor of the active site.

This sequence belongs to the exosortase/archaeosortase family. Archaeosortase A subfamily.

It is found in the cell membrane. Its function is as follows. Transpeptidase that recognizes and modifies its substrate by proteolytic cleavage of a sorting signal. Following cleavage, a covalent intermediate is formed via a thioester bond between the archaeosortase and its substrate, which is then transferred and covalently attached to the cell membrane. The polypeptide is Archaeosortase A (Natronomonas pharaonis (strain ATCC 35678 / DSM 2160 / CIP 103997 / JCM 8858 / NBRC 14720 / NCIMB 2260 / Gabara) (Halobacterium pharaonis)).